We begin with the raw amino-acid sequence, 671 residues long: MGQVHLHNRSFNKATSAGFLIALGIVYGDIGTSPLYAMQAIVRGQGGLANLSESFILGAVSLVIWTLTLITTVKYVLIALKADNHHEGGIFSLFTLVRRMRKWLIIPAMIGGATLLADGALTPAVTVTSAIEGLRGVTHVYSNQTAVMVTTLIILAFLFLIQRFGASLVGRLFGPIMFIWFGFLGVSGLINSFLDLSILKAINPYYAIHLLFSPENKAGFFILGSIFLVTTGAEALYSDLGHVGRGNIYVSWPFVKICIILSYCGQGAWLLAHRGEHIEKLNPFFAVLPDNMVIYVVILSTLAAIIASQALISGSFTLVSEAIRLKLLPLFKIYYPGQTLGQLYIPAVNFALWVTTSFFVLYFKTSEHMEAAYSLAITITMLMTTTLLTYFLIQKGTPKIAIAIISIGLFCIEGSFFAASLVQFINGAYIVVLIALAIIFVMFIWNKSHKIVMKYIKSLNINEYKNQLNALRHDESYDLYQTNVVYLTSKMDHEWIDRSILYSILDKRPKRAECYWFVNVKVTDEPYTSEYKVDMMDTDFIVRVNLYLGFRMRQEVPRYLRTIVTDLMESGRLPRQHQHYSITPGRKVGDFRFVVVEEKLMNARQMPGFERFVLQTKAQIKRITASPIRWFGLQFSEVTVETVPLVLSDVRNLEIHERLEQVDEAEASATH.

A run of 12 helical transmembrane segments spans residues 18–38 (GFLI…LYAM), 60–80 (VSLV…LIAL), 103–123 (WLII…ALTP), 146–166 (AVMV…RFGA), 173–193 (FGPI…INSF), 218–238 (AGFF…ALYS), 252–272 (WPFV…WLLA), 292–312 (MVIY…QALI), 343–363 (LYIP…VLYF), 373–393 (YSLA…YFLI), 402–422 (IAII…ASLV), and 424–444 (FING…VMFI).

The protein belongs to the HAK/KUP transporter (TC 2.A.72) family.

The protein resides in the cell membrane. The enzyme catalyses K(+)(in) + H(+)(in) = K(+)(out) + H(+)(out). Transport of potassium into the cell. Likely operates as a K(+):H(+) symporter. This Lactococcus lactis subsp. lactis (strain IL1403) (Streptococcus lactis) protein is Probable potassium transport system protein Kup 2.